The sequence spans 454 residues: Asparagine--tRNA ligase (454 aa).

The protein belongs to the class-II aminoacyl-tRNA synthetase family. As to quaternary structure, homodimer.

The protein resides in the cytoplasm. The catalysed reaction is tRNA(Asn) + L-asparagine + ATP = L-asparaginyl-tRNA(Asn) + AMP + diphosphate + H(+). In Mycoplasma capricolum subsp. capricolum (strain California kid / ATCC 27343 / NCTC 10154), this protein is Asparagine--tRNA ligase.